A 619-amino-acid chain; its full sequence is Dihydroxy-acid dehydratase (619 aa).

Residue Asp81 coordinates Mg(2+). Cys122 is a binding site for [2Fe-2S] cluster. Residues Asp123 and Lys124 each coordinate Mg(2+). An N6-carboxylysine modification is found at Lys124. Residue Cys195 coordinates [2Fe-2S] cluster. Mg(2+) is bound at residue Glu492. Ser518 serves as the catalytic Proton acceptor.

It belongs to the IlvD/Edd family. As to quaternary structure, homodimer. [2Fe-2S] cluster is required as a cofactor. The cofactor is Mg(2+).

The catalysed reaction is (2R)-2,3-dihydroxy-3-methylbutanoate = 3-methyl-2-oxobutanoate + H2O. The enzyme catalyses (2R,3R)-2,3-dihydroxy-3-methylpentanoate = (S)-3-methyl-2-oxopentanoate + H2O. It functions in the pathway amino-acid biosynthesis; L-isoleucine biosynthesis; L-isoleucine from 2-oxobutanoate: step 3/4. It participates in amino-acid biosynthesis; L-valine biosynthesis; L-valine from pyruvate: step 3/4. In terms of biological role, functions in the biosynthesis of branched-chain amino acids. Catalyzes the dehydration of (2R,3R)-2,3-dihydroxy-3-methylpentanoate (2,3-dihydroxy-3-methylvalerate) into 2-oxo-3-methylpentanoate (2-oxo-3-methylvalerate) and of (2R)-2,3-dihydroxy-3-methylbutanoate (2,3-dihydroxyisovalerate) into 2-oxo-3-methylbutanoate (2-oxoisovalerate), the penultimate precursor to L-isoleucine and L-valine, respectively. The polypeptide is Dihydroxy-acid dehydratase (Synechococcus elongatus (strain ATCC 33912 / PCC 7942 / FACHB-805) (Anacystis nidulans R2)).